A 940-amino-acid chain; its full sequence is Mitogen-activated protein kinase kinase kinase 10 (940 aa).

One can recognise an SH3 domain in the interval 16–81 (PAGPVWTAVF…PSNYVAPAAP (66 aa)). The Protein kinase domain occupies 98–360 (LQLEEIIGVG…GSILKQLEVI (263 aa)). ATP-binding positions include 104–112 (IGVGGFGKV) and K125. D222 (proton acceptor) is an active-site residue. At T258 the chain carries Phosphothreonine; by autocatalysis. The residue at position 262 (S262) is a Phosphoserine; by autocatalysis and MAP4K1. Leucine-zipper regions lie at residues 384–405 (IQHMFDDLRTKEKELRSREEEL) and 419–440 (LRRREQELAEREMDIVERELHL). Disordered stretches follow at residues 490–599 (PTLD…MAPG), 687–734 (RAGD…GLAP), and 749–917 (STRS…QPTL). Residues S498, S502, and S506 each carry the phosphoserine modification. The segment covering 501–511 (ASPPASPSIIP) has biased composition (low complexity). Phosphothreonine is present on T552. Basic and acidic residues-rich tracts occupy residues 560 to 572 (QKERAGGEERLKA) and 687 to 698 (RAGDGEEQRRWL). The segment covering 765 to 775 (APSPPPSPLAP) has biased composition (pro residues). Positions 822 to 840 (LRQREPLELTNHGPRDPLD) are enriched in basic and acidic residues. R843 is subject to Omega-N-methylarginine. Over residues 899-913 (PSRPDTPESPGPPSV) the composition is skewed to pro residues.

It belongs to the protein kinase superfamily. STE Ser/Thr protein kinase family. MAP kinase kinase kinase subfamily. Homodimer. Interacts with SH3RF2. Requires Mg(2+) as cofactor. Post-translationally, autophosphorylation on serine and threonine residues within the activation loop plays a role in enzyme activation.

It carries out the reaction L-seryl-[protein] + ATP = O-phospho-L-seryl-[protein] + ADP + H(+). It catalyses the reaction L-threonyl-[protein] + ATP = O-phospho-L-threonyl-[protein] + ADP + H(+). Its activity is regulated as follows. Homodimerization via the leucine zipper domains is required for autophosphorylation and subsequent activation. In terms of biological role, activates the JUN N-terminal pathway. The polypeptide is Mitogen-activated protein kinase kinase kinase 10 (Map3k10) (Mus musculus (Mouse)).